The chain runs to 439 residues: Acyl-coenzyme A thioesterase 9, mitochondrial (439 aa).

The N-terminal 21 residues, 1–21 (MKRAAIRLWTLNKGLLTHGRG), are a transit peptide targeting the mitochondrion. 2 HotDog ACOT-type domains span residues 85-209 (SYIE…RDSE) and 289-401 (EDTK…EKEV). Position 102 is an N6-acetyllysine (Lys-102).

Belongs to the acyl coenzyme A hydrolase family. In terms of assembly, interacts with NYAP1, NYAP2 and MYO16. As to expression, widely expressed.

Its subcellular location is the mitochondrion. The protein localises to the mitochondrion matrix. It localises to the mitochondrion inner membrane. It catalyses the reaction butanoyl-CoA + H2O = butanoate + CoA + H(+). The enzyme catalyses propanoyl-CoA + H2O = propanoate + CoA + H(+). The catalysed reaction is hexadecanoyl-CoA + H2O = hexadecanoate + CoA + H(+). It carries out the reaction octanoyl-CoA + H2O = octanoate + CoA + H(+). It catalyses the reaction decanoyl-CoA + H2O = decanoate + CoA + H(+). The enzyme catalyses tetradecanoyl-CoA + H2O = tetradecanoate + CoA + H(+). The catalysed reaction is 4,8-dimethylnonanoyl-CoA + H2O = 4,8-dimethylnonanoate + CoA + H(+). It carries out the reaction 3-methylbutanoyl-CoA + H2O = 3-methylbutanoate + CoA + H(+). It catalyses the reaction 2-methylpropanoyl-CoA + H2O = 2-methylpropanoate + CoA + H(+). Its pathway is lipid metabolism; fatty acid metabolism. Its activity is regulated as follows. Strongly inhibited by NADH and CoA. In terms of biological role, mitochondrial acyl-CoA thioesterase. Catalyzes the hydrolysis of acyl-CoAs into free fatty acids and coenzyme A (CoA), regulating their respective intracellular levels. Shows a clear preference for hydrophobic short-, medium-, and long-chain saturated acyl-CoAs with some activity also with short-chain dicarboxylic CoA esters. Regulates both mitochondrial lipid and amino acid metabolism. The protein is Acyl-coenzyme A thioesterase 9, mitochondrial (Acot9) of Mus musculus (Mouse).